The chain runs to 271 residues: 2-aminophenol 1,6-dioxygenase subunit alpha (271 aa).

Belongs to the LigB/MhpB extradiol dioxygenase family. As to quaternary structure, the APD complex is a heterotetramer of 2 alpha (CnbCa) and 2 beta (CnbCb) subunits.

It participates in xenobiotic degradation; nitrobenzene degradation. The protein operates within xenobiotic degradation; 4-chloronitrobenzene degradation. Its function is as follows. Component of the 2-aminophenol 1,6-dioxygenase (APD) complex that catalyzes the ring fission of 2-aminophenol to produce 2-aminomuconic semialdehyde. CnbCa may have a role in the stability of the complex. The complex is also active on other substrates such as 2-amino-5-chlorophenol (68% activity), protocatechuate (33% activity) and catechol (5% activity). Both 2-aminophenol and 2-amino-5-cholorophenol are likely native substrates for this dioxygenase which is involved in the reductive degradation pathway of both nitrobenzene (NB) and 4-chloronitrobenzene (4-CNB), allowing C.testosteroni strain CNB-1 to grow on these compounds as sole source of carbon, nitrogen, and energy. The protein is 2-aminophenol 1,6-dioxygenase subunit alpha of Comamonas testosteroni (Pseudomonas testosteroni).